A 382-amino-acid chain; its full sequence is MTAPLKHSDPVNVDVALGDRAYDIVIGRGVLASLGERVAALRPGVRTAVVTDRTVAKHWLEPTEASLAAAGIPTSRIVVEEGEISKTYAGLEKVSEALIAAKIERNDLVIALGGGVVGDLAGFAAAILRRGVDFVQVPTSLLAQVDSSVGGKTGINSPQGKNLLGAFHQPVLVIADTAVLDTLSPRQFHAGYAEVAKYGVLGDEAFFTWLEKNHSDIFKGGSAREHAIATSCRAKAGIVSRDERETGERALLNLGHTFGHALEAATGFSDRLFHGEGVAIGMTLAAQFSAKLGMIGEADAARVERHLIEAGLPTRLQDIAGFSQEGLADADALMALMAQDKKVKRGKLTFILLEAVGRAVIAKDVEPAPVRDFLKEKLAQKA.

Residues 81–86 (EGEISK), 115–119 (GVVGD), 139–140 (TS), K152, and K161 each bind NAD(+). 3 residues coordinate Zn(2+): E194, H256, and H274.

Belongs to the sugar phosphate cyclases superfamily. Dehydroquinate synthase family. The cofactor is NAD(+). Co(2+) is required as a cofactor. Requires Zn(2+) as cofactor.

It localises to the cytoplasm. The catalysed reaction is 7-phospho-2-dehydro-3-deoxy-D-arabino-heptonate = 3-dehydroquinate + phosphate. It participates in metabolic intermediate biosynthesis; chorismate biosynthesis; chorismate from D-erythrose 4-phosphate and phosphoenolpyruvate: step 2/7. Its function is as follows. Catalyzes the conversion of 3-deoxy-D-arabino-heptulosonate 7-phosphate (DAHP) to dehydroquinate (DHQ). This is 3-dehydroquinate synthase from Bradyrhizobium diazoefficiens (strain JCM 10833 / BCRC 13528 / IAM 13628 / NBRC 14792 / USDA 110).